A 284-amino-acid polypeptide reads, in one-letter code: D-tagatose-1,6-bisphosphate aldolase subunit GatY (284 aa).

Catalysis depends on Asp-82, which acts as the Proton donor. Residues His-83 and His-180 each coordinate Zn(2+). Dihydroxyacetone phosphate is bound at residue Gly-181. Residue His-208 participates in Zn(2+) binding. Dihydroxyacetone phosphate-binding positions include 209–211 (GAS) and 230–233 (NVAT).

It belongs to the class II fructose-bisphosphate aldolase family. TagBP aldolase GatY subfamily. As to quaternary structure, forms a complex with GatZ. Requires Zn(2+) as cofactor.

It carries out the reaction D-tagatofuranose 1,6-bisphosphate = D-glyceraldehyde 3-phosphate + dihydroxyacetone phosphate. Its pathway is carbohydrate metabolism; D-tagatose 6-phosphate degradation; D-glyceraldehyde 3-phosphate and glycerone phosphate from D-tagatose 6-phosphate: step 2/2. In terms of biological role, catalytic subunit of the tagatose-1,6-bisphosphate aldolase GatYZ, which catalyzes the reversible aldol condensation of dihydroxyacetone phosphate (DHAP or glycerone-phosphate) with glyceraldehyde 3-phosphate (G3P) to produce tagatose 1,6-bisphosphate (TBP). Requires GatZ subunit for full activity and stability. Is involved in the catabolism of galactitol. In Escherichia coli O17:K52:H18 (strain UMN026 / ExPEC), this protein is D-tagatose-1,6-bisphosphate aldolase subunit GatY.